A 425-amino-acid chain; its full sequence is MSTQPATIADSATDLVEGLARAARSAQRQLARMDSPVKERALTLAAAALRAAEAEILAANAQDMANGAANGLSSAMLDRLKLTPERLAGIADAVAQVAGLADPVGEVISEAARPNGMVLQRVRIPVGVIGIIYESRPNVTADAAALCVRSGNAAILRGGSEAVHSNRAIHKALVAGLAEGGVPAEAVQLVPTQDRAAVGAMLGAAGLIDMIVPRGGKSLVARVQADARVPVLAHLDGINHTFVHASADPAMAQAIVLNAKMRRTGVCGAMETLLIDATYPDPHGLVEPLLDAGCELRGDARARAIDPRIAPAADNDWDTEYLEAILSVAVVDGLDEALAHIARHASGHTDAIVAADQDVADRFLAEVDSAIVMHNASSQFADGGEFGLGAEIGIATGRLHARGPVALEGLTTYKWLVRGSGQTRP.

Belongs to the gamma-glutamyl phosphate reductase family.

It is found in the cytoplasm. The enzyme catalyses L-glutamate 5-semialdehyde + phosphate + NADP(+) = L-glutamyl 5-phosphate + NADPH + H(+). It functions in the pathway amino-acid biosynthesis; L-proline biosynthesis; L-glutamate 5-semialdehyde from L-glutamate: step 2/2. Its function is as follows. Catalyzes the NADPH-dependent reduction of L-glutamate 5-phosphate into L-glutamate 5-semialdehyde and phosphate. The product spontaneously undergoes cyclization to form 1-pyrroline-5-carboxylate. This Novosphingobium aromaticivorans (strain ATCC 700278 / DSM 12444 / CCUG 56034 / CIP 105152 / NBRC 16084 / F199) protein is Gamma-glutamyl phosphate reductase.